We begin with the raw amino-acid sequence, 480 residues long: Membrane-bound lytic murein transglycosylase F (480 aa).

The first 15 residues, 1-15, serve as a signal peptide directing secretion; the sequence is MKKLLFVLLTITLLA. Residues 16–259 are non-LT domain; the sequence is SCQKVSVEQT…HLNEKYFAHV (244 aa). The tract at residues 260–480 is LT domain; sequence KRFDYVDTRA…QENLSGAQPQ (221 aa). E304 is a catalytic residue.

In the N-terminal section; belongs to the bacterial solute-binding protein 3 family. This sequence in the C-terminal section; belongs to the transglycosylase Slt family.

The protein localises to the cell outer membrane. The catalysed reaction is Exolytic cleavage of the (1-&gt;4)-beta-glycosidic linkage between N-acetylmuramic acid (MurNAc) and N-acetylglucosamine (GlcNAc) residues in peptidoglycan, from either the reducing or the non-reducing ends of the peptidoglycan chains, with concomitant formation of a 1,6-anhydrobond in the MurNAc residue.. Its function is as follows. Murein-degrading enzyme that degrades murein glycan strands and insoluble, high-molecular weight murein sacculi, with the concomitant formation of a 1,6-anhydromuramoyl product. Lytic transglycosylases (LTs) play an integral role in the metabolism of the peptidoglycan (PG) sacculus. Their lytic action creates space within the PG sacculus to allow for its expansion as well as for the insertion of various structures such as secretion systems and flagella. This Shewanella sediminis (strain HAW-EB3) protein is Membrane-bound lytic murein transglycosylase F.